Reading from the N-terminus, the 98-residue chain is Citrate lyase acyl carrier protein (98 aa).

At Ser14 the chain carries O-(phosphoribosyl dephospho-coenzyme A)serine.

Belongs to the CitD family. Oligomer with a subunit composition of (alpha,beta,gamma)6.

The protein resides in the cytoplasm. Its function is as follows. Covalent carrier of the coenzyme of citrate lyase. In Escherichia coli O127:H6 (strain E2348/69 / EPEC), this protein is Citrate lyase acyl carrier protein.